Reading from the N-terminus, the 497-residue chain is Glycerol kinase (497 aa).

Thr-11 contacts ADP. 3 residues coordinate ATP: Thr-11, Ser-12, and Ser-13. Thr-11 is a sn-glycerol 3-phosphate binding site. Arg-15 lines the ADP pocket. Sn-glycerol 3-phosphate contacts are provided by Arg-81, Glu-82, Tyr-133, and Asp-242. Residues Arg-81, Glu-82, Tyr-133, Asp-242, and Gln-243 each coordinate glycerol. ADP contacts are provided by Thr-264 and Gly-307. Residues Thr-264, Gly-307, Gln-311, and Gly-412 each coordinate ATP. ADP-binding residues include Gly-412 and Asn-416.

The protein belongs to the FGGY kinase family.

The catalysed reaction is glycerol + ATP = sn-glycerol 3-phosphate + ADP + H(+). Its pathway is polyol metabolism; glycerol degradation via glycerol kinase pathway; sn-glycerol 3-phosphate from glycerol: step 1/1. Its activity is regulated as follows. Inhibited by fructose 1,6-bisphosphate (FBP). In terms of biological role, key enzyme in the regulation of glycerol uptake and metabolism. Catalyzes the phosphorylation of glycerol to yield sn-glycerol 3-phosphate. The protein is Glycerol kinase of Polaromonas naphthalenivorans (strain CJ2).